The chain runs to 152 residues: Heavy metal-associated isoprenylated plant protein 22 (152 aa).

Residues 28 to 91 (MQTVNIKVKI…TVQSTGKKKA (64 aa)) enclose the HMA domain. Residues Cys-39 and Cys-42 each coordinate a metal cation. The interval 123–152 (SEQAQAQPGSTDDKLMSLFSDENPNACTVM) is disordered. The segment covering 142–152 (SDENPNACTVM) has biased composition (polar residues). Cysteine methyl ester is present on Cys-149. Cys-149 is lipidated: S-farnesyl cysteine. Residues 150-152 (TVM) constitute a propeptide, removed in mature form.

It belongs to the HIPP family. As to quaternary structure, interacts with ZHD11/HB29. Expressed in lateral roots and mature anthers.

It localises to the membrane. In terms of biological role, heavy-metal-binding protein. Binds cadmium. May be involved in cadmium transport and play a role in cadmium detoxification. This Arabidopsis thaliana (Mouse-ear cress) protein is Heavy metal-associated isoprenylated plant protein 22.